The sequence spans 490 residues: Cardiolipin synthase 1 (490 aa).

2 helical membrane-spanning segments follow: residues 9–29 (ILTI…FVII) and 42–62 (WAWL…YLFL). 2 consecutive PLD phosphodiesterase domains span residues 225–252 (MNNR…GDDY) and 403–430 (QNGF…DFRS). Catalysis depends on residues His-230, Lys-232, Asp-237, His-408, Lys-410, and Asp-415.

Belongs to the phospholipase D family. Cardiolipin synthase subfamily.

It localises to the cell membrane. The enzyme catalyses 2 a 1,2-diacyl-sn-glycero-3-phospho-(1'-sn-glycerol) = a cardiolipin + glycerol. In terms of biological role, catalyzes the reversible phosphatidyl group transfer from one phosphatidylglycerol molecule to another to form cardiolipin (CL) (diphosphatidylglycerol) and glycerol. This chain is Cardiolipin synthase 1 (cls1), found in Staphylococcus epidermidis (strain ATCC 12228 / FDA PCI 1200).